Here is a 460-residue protein sequence, read N- to C-terminus: Ribosomal protein uS12 methylthiotransferase RimO (460 aa).

Residues 16–130 enclose the MTTase N-terminal domain; sequence NKIHFISLGC…ILSAIESKEY (115 aa). 6 residues coordinate [4Fe-4S] cluster: Cys-25, Cys-61, Cys-93, Cys-164, Cys-168, and Cys-171. In terms of domain architecture, Radical SAM core spans 150–382; sequence STPKHYAYLK…SQAQKQNVEK (233 aa). Residues 385 to 455 form the TRAM domain; the sequence is QKLVGQVVEA…GYDLIGRVVK (71 aa).

The protein belongs to the methylthiotransferase family. RimO subfamily. Requires [4Fe-4S] cluster as cofactor.

Its subcellular location is the cytoplasm. The catalysed reaction is L-aspartate(89)-[ribosomal protein uS12]-hydrogen + (sulfur carrier)-SH + AH2 + 2 S-adenosyl-L-methionine = 3-methylsulfanyl-L-aspartate(89)-[ribosomal protein uS12]-hydrogen + (sulfur carrier)-H + 5'-deoxyadenosine + L-methionine + A + S-adenosyl-L-homocysteine + 2 H(+). Its function is as follows. Catalyzes the methylthiolation of an aspartic acid residue of ribosomal protein uS12. In Chlamydia felis (strain Fe/C-56) (Chlamydophila felis), this protein is Ribosomal protein uS12 methylthiotransferase RimO.